The chain runs to 347 residues: Transcription factor JunD (347 aa).

Residues methionine 1 to serine 43 form a disordered region. Residues glycine 13 to glycine 23 are compositionally biased toward gly residues. The Menin-binding motif (MBM) signature appears at serine 27–alanine 39. An MAP kinase docking motif; essential for its phosphorylation motif is present at residues lysine 46 to serine 55. Positions leucine 62–glycine 86 are disordered. The span at leucine 73–glycine 86 shows a compositional bias: low complexity. Serine 90 carries the post-translational modification Phosphoserine. Serine 100 carries the phosphoserine; by MAPK8 modification. Position 117 is a phosphothreonine (threonine 117). The interval glutamine 244–aspartate 264 is disordered. Serine 251, serine 255, and serine 259 each carry phosphoserine. The segment at arginine 268–arginine 295 is basic motif. A bZIP domain is found at arginine 268–histidine 331. The tract at residues leucine 296–leucine 324 is leucine-zipper.

The protein belongs to the bZIP family. Jun subfamily. In terms of assembly, heterodimer; binds DNA as a heterodimer. Component of an AP-1 transcription factor complex composed of JUN-FOS heterodimers. As part of the AP-1 transcription factor complex, forms heterodimers with FOS proteins, thereby binding to the AP-1 consensus sequence and stimulating transcription. Forms heterodimers with FOSB; thereby binding to the AP-1 consensus sequence. Interacts (via MBM motif) with MEN1; this interaction represses transcriptional activation. Interacts with MAPK10; this interaction is inhibited in the presence of MEN1. In terms of processing, phosphorylated by MAP kinases MAPK8 and MAPK10; phosphorylation is inhibited in the presence of MEN1.

It localises to the nucleus. Transcription factor binding AP-1 sites. Heterodimerizes with proteins of the FOS family to form an AP-1 transcription factor complex, thereby enhancing their DNA binding activity to an AP-1 consensus sequence 3'-TGA[GC]TCA-5' and enhancing their transcriptional activity. The chain is Transcription factor JunD (JUND) from Homo sapiens (Human).